We begin with the raw amino-acid sequence, 296 residues long: tRNA U34 carboxymethyltransferase (296 aa).

Carboxy-S-adenosyl-L-methionine contacts are provided by residues Lys64, Trp78, Lys83, Gly102, 124–126 (DPS), 151–152 (VE), Tyr171, and Arg286.

The protein belongs to the class I-like SAM-binding methyltransferase superfamily. CmoB family. In terms of assembly, homotetramer.

It catalyses the reaction carboxy-S-adenosyl-L-methionine + 5-hydroxyuridine(34) in tRNA = 5-carboxymethoxyuridine(34) in tRNA + S-adenosyl-L-homocysteine + H(+). Functionally, catalyzes carboxymethyl transfer from carboxy-S-adenosyl-L-methionine (Cx-SAM) to 5-hydroxyuridine (ho5U) to form 5-carboxymethoxyuridine (cmo5U) at position 34 in tRNAs. This chain is tRNA U34 carboxymethyltransferase, found in Sulfurimonas denitrificans (strain ATCC 33889 / DSM 1251) (Thiomicrospira denitrificans (strain ATCC 33889 / DSM 1251)).